The following is a 64-amino-acid chain: Putative neurotoxin-G (64 aa).

A signal peptide spans 1 to 19 (MFAMVTVTVLLLISSGIFC). Intrachain disulfides connect Cys-25/Cys-45, Cys-32/Cys-54, and Cys-36/Cys-56.

Expressed by the venom gland.

The protein resides in the secreted. The chain is Putative neurotoxin-G from Lychas mucronatus (Chinese swimming scorpion).